We begin with the raw amino-acid sequence, 1097 residues long: DNA-directed RNA polymerase subunit beta (1097 aa).

Residues 1070–1097 (LMQDVNPRRNTPSRPTYESLGTSEYEED) form a disordered region. The segment covering 1077–1091 (RRNTPSRPTYESLGT) has biased composition (polar residues).

The protein belongs to the RNA polymerase beta chain family. In cyanobacteria the RNAP catalytic core is composed of 2 alpha, 1 beta, 1 beta', 1 gamma and 1 omega subunit. When a sigma factor is associated with the core the holoenzyme is formed, which can initiate transcription.

The catalysed reaction is RNA(n) + a ribonucleoside 5'-triphosphate = RNA(n+1) + diphosphate. DNA-dependent RNA polymerase catalyzes the transcription of DNA into RNA using the four ribonucleoside triphosphates as substrates. This chain is DNA-directed RNA polymerase subunit beta, found in Prochlorococcus marinus (strain MIT 9515).